We begin with the raw amino-acid sequence, 142 residues long: Large ribosomal subunit protein uL13 (142 aa).

It belongs to the universal ribosomal protein uL13 family. In terms of assembly, part of the 50S ribosomal subunit.

This protein is one of the early assembly proteins of the 50S ribosomal subunit, although it is not seen to bind rRNA by itself. It is important during the early stages of 50S assembly. This is Large ribosomal subunit protein uL13 from Aeromonas hydrophila subsp. hydrophila (strain ATCC 7966 / DSM 30187 / BCRC 13018 / CCUG 14551 / JCM 1027 / KCTC 2358 / NCIMB 9240 / NCTC 8049).